Reading from the N-terminus, the 223-residue chain is Mediator of RNA polymerase II transcription subunit 8 (223 aa).

An interaction with TBP1 region spans residues 2 to 138; it reads SQSTASLVPE…VRETSGVTTA (137 aa). Residues 33-59 are a coiled coil; the sequence is LDAVRMRLAQLTHSLRRIRDEMSKAEL.

It belongs to the Mediator complex subunit 8 family. As to quaternary structure, component of the Mediator complex, which is composed of at least 21 subunits that form three structurally distinct submodules. The Mediator head module contains MED6, MED8, MED11, SRB4/MED17, SRB5/MED18, ROX3/MED19, SRB2/MED20 and SRB6/MED22, the middle module contains MED1, MED4, NUT1/MED5, MED7, CSE2/MED9, NUT2/MED10, SRB7/MED21 and SOH1/MED31, and the tail module contains MED2, PGD1/MED3, RGR1/MED14, GAL11/MED15 and SIN4/MED16. The head and the middle modules interact directly with RNA polymerase II, whereas the elongated tail module interacts with gene-specific regulatory proteins. MED8 interacts directly with SRB5/MED18. Also interacts with Hexokinase B (HXK2). Interacts with TBP1.

The protein resides in the nucleus. Functionally, component of the Mediator complex, a coactivator involved in the regulated transcription of nearly all RNA polymerase II-dependent genes. Mediator functions as a bridge to convey information from gene-specific regulatory proteins to the basal RNA polymerase II transcription machinery. The Mediator complex, having a compact conformation in its free form, is recruited to promoters by direct interactions with regulatory proteins and serves for the assembly of a functional preinitiation complex with RNA polymerase II and the general transcription factors. The Mediator complex unfolds to an extended conformation and partially surrounds RNA polymerase II, specifically interacting with the unphosphorylated form of the C-terminal domain (CTD) of RNA polymerase II. The Mediator complex dissociates from the RNA polymerase II holoenzyme and stays at the promoter when transcriptional elongation begins. MED8 binds to the consensus sequence 5'-[AC][AG]GAAAT-3' in both the UAS of SUC2 and the DRS2 of HXK2. The polypeptide is Mediator of RNA polymerase II transcription subunit 8 (MED8) (Saccharomyces cerevisiae (strain ATCC 204508 / S288c) (Baker's yeast)).